The primary structure comprises 265 residues: Hydroxyethylthiazole kinase (265 aa).

Residue M43 coordinates substrate. Residues K118 and T165 each coordinate ATP. Substrate is bound at residue G192.

It belongs to the Thz kinase family. Mg(2+) is required as a cofactor.

The catalysed reaction is 5-(2-hydroxyethyl)-4-methylthiazole + ATP = 4-methyl-5-(2-phosphooxyethyl)-thiazole + ADP + H(+). Its pathway is cofactor biosynthesis; thiamine diphosphate biosynthesis; 4-methyl-5-(2-phosphoethyl)-thiazole from 5-(2-hydroxyethyl)-4-methylthiazole: step 1/1. Catalyzes the phosphorylation of the hydroxyl group of 4-methyl-5-beta-hydroxyethylthiazole (THZ). The chain is Hydroxyethylthiazole kinase from Pyrococcus furiosus (strain ATCC 43587 / DSM 3638 / JCM 8422 / Vc1).